Consider the following 116-residue polypeptide: Large ribosomal subunit protein bL20 (116 aa).

The protein belongs to the bacterial ribosomal protein bL20 family.

Its function is as follows. Binds directly to 23S ribosomal RNA and is necessary for the in vitro assembly process of the 50S ribosomal subunit. It is not involved in the protein synthesizing functions of that subunit. The protein is Large ribosomal subunit protein bL20 of Helicobacter acinonychis (strain Sheeba).